Here is a 367-residue protein sequence, read N- to C-terminus: tRNA/tmRNA (uracil-C(5))-methyltransferase (367 aa).

Residues glutamine 189, tyrosine 217, asparagine 222, glutamate 238, and aspartate 298 each coordinate S-adenosyl-L-methionine. Cysteine 323 acts as the Nucleophile in catalysis. Catalysis depends on glutamate 357, which acts as the Proton acceptor.

Belongs to the class I-like SAM-binding methyltransferase superfamily. RNA M5U methyltransferase family. TrmA subfamily.

It catalyses the reaction uridine(54) in tRNA + S-adenosyl-L-methionine = 5-methyluridine(54) in tRNA + S-adenosyl-L-homocysteine + H(+). The enzyme catalyses uridine(341) in tmRNA + S-adenosyl-L-methionine = 5-methyluridine(341) in tmRNA + S-adenosyl-L-homocysteine + H(+). Functionally, dual-specificity methyltransferase that catalyzes the formation of 5-methyluridine at position 54 (m5U54) in all tRNAs, and that of position 341 (m5U341) in tmRNA (transfer-mRNA). In Pseudoalteromonas translucida (strain TAC 125), this protein is tRNA/tmRNA (uracil-C(5))-methyltransferase.